We begin with the raw amino-acid sequence, 1543 residues long: Rho guanine nucleotide exchange factor 12 (1543 aa).

The disordered stretch occupies residues 1 to 62 (MSGTQSTITD…KTKSSSEESR (62 aa)). At serine 2 the chain carries N-acetylserine. Positions 28-45 (SPTDKKQKVERSSSHDFD) are enriched in basic and acidic residues. Position 41 is a phosphoserine (serine 41). The PDZ domain maps to 72–151 (CVIIQKDDNG…LTVQGRPPGS (80 aa)). Residues 194–262 (VGEENNVVHN…LSKATGSAQD (69 aa)) are a coiled coil. Positions 281–355 (AEADPGDGLC…GAPHIIGAED (75 aa)) are disordered. Residues 293 to 312 (DWSSGDASRPSSDSADSPKS) show a composition bias toward low complexity. Phosphoserine is present on serine 309. Residues 313–329 (SLRERSYLEEAPERSEG) show a composition bias toward basic and acidic residues. Serine 341 is subject to Phosphoserine. The region spanning 367–558 (GQCSCFQSIE…LMYMKYLGVK (192 aa)) is the RGSL domain. The segment at 574–710 (FLPKIKQSMK…DSTPRVPTTV (137 aa)) is disordered. Basic and acidic residues predominate over residues 582–592 (MKKDREGEEKG). Serine 637 carries the phosphoserine modification. Low complexity predominate over residues 663–676 (ASSMSSATSGTALS). The residue at position 736 (threonine 736) is a Phosphothreonine. Residues 787–977 (KRQEVINELF…RQILNYVNQA (191 aa)) form the DH domain. The stretch at 981–1004 (AENKQRLEDYQRRLDTSNLKLSEY) forms a coiled coil. The PH domain occupies 1019-1132 (KMIHEGPLVW…WQDLICRMAA (114 aa)). The segment at 1137 to 1158 (QSTKPIPLPQPPPCEGDNDEEE) is disordered. 3 positions are modified to phosphoserine: serine 1288, serine 1327, and serine 1377. 2 disordered regions span residues 1386-1405 (EAHS…KEEK) and 1441-1468 (PVTG…GPVS). Residues 1450–1460 (SSHQQQHSPQN) show a composition bias toward polar residues. Phosphoserine occurs at positions 1457 and 1540.

In terms of assembly, interacts with GNA12 and GNA13, probably through the RGS-like domain, with RHOA, PLXNB1 and PLXNB2, and through its PDZ domain with IGF1R beta subunit. Interacts with GCSAM. Found in a complex with ARHGEF11 and ARHGEF12; binding to ARHGEF11 and ARHGEF12 enhances CDC42 GEF activity of PLEKHG4B, and PLEKHG4B, in turn, inhibits ARHGEF11- and ARHGEF12-mediated RHOA activation. As to expression, expressed in brain, predominantly in neuronal cell bodies.

It localises to the cytoplasm. The protein localises to the membrane. In terms of biological role, may play a role in the regulation of RhoA GTPase by guanine nucleotide-binding alpha-12 (GNA12) and alpha-13 (GNA13). Acts as guanine nucleotide exchange factor (GEF) for RhoA GTPase and may act as GTPase-activating protein (GAP) for GNA12 and GNA13. This Mus musculus (Mouse) protein is Rho guanine nucleotide exchange factor 12 (Arhgef12).